Here is a 222-residue protein sequence, read N- to C-terminus: Pyridoxine/pyridoxamine 5'-phosphate oxidase (222 aa).

Substrate contacts are provided by residues 16–19 (RVSY) and Lys-75. Residues 70-75 (RTVLCK), 85-86 (FT), Lys-92, and Gln-114 each bind FMN. Substrate is bound by residues Tyr-132, Arg-136, and Ser-140. Residues 149–150 (QS) and Trp-195 contribute to the FMN site. 201-203 (RLH) provides a ligand contact to substrate. An FMN-binding site is contributed by Arg-205.

Belongs to the pyridoxamine 5'-phosphate oxidase family. Homodimer. Requires FMN as cofactor.

It catalyses the reaction pyridoxamine 5'-phosphate + O2 + H2O = pyridoxal 5'-phosphate + H2O2 + NH4(+). The enzyme catalyses pyridoxine 5'-phosphate + O2 = pyridoxal 5'-phosphate + H2O2. It functions in the pathway cofactor metabolism; pyridoxal 5'-phosphate salvage; pyridoxal 5'-phosphate from pyridoxamine 5'-phosphate: step 1/1. Its pathway is cofactor metabolism; pyridoxal 5'-phosphate salvage; pyridoxal 5'-phosphate from pyridoxine 5'-phosphate: step 1/1. Catalyzes the oxidation of either pyridoxine 5'-phosphate (PNP) or pyridoxamine 5'-phosphate (PMP) into pyridoxal 5'-phosphate (PLP). The polypeptide is Pyridoxine/pyridoxamine 5'-phosphate oxidase (Saccharopolyspora erythraea (strain ATCC 11635 / DSM 40517 / JCM 4748 / NBRC 13426 / NCIMB 8594 / NRRL 2338)).